Consider the following 464-residue polypeptide: tRNA modification GTPase MnmE (464 aa).

(6S)-5-formyl-5,6,7,8-tetrahydrofolate contacts are provided by Arg27, Glu89, and Arg128. A TrmE-type G domain is found at 225–384; sequence GLATAIIGHP…LEDRIAAMFF (160 aa). Residue Asn235 coordinates K(+). GTP contacts are provided by residues 235 to 240, 254 to 260, and 279 to 282; these read NVGKSS, TDVAGTT, and DTAG. Ser239 serves as a coordination point for Mg(2+). Residues Thr254, Val256, and Thr259 each coordinate K(+). Thr260 contacts Mg(2+). Lys464 contacts (6S)-5-formyl-5,6,7,8-tetrahydrofolate.

Belongs to the TRAFAC class TrmE-Era-EngA-EngB-Septin-like GTPase superfamily. TrmE GTPase family. In terms of assembly, homodimer. Heterotetramer of two MnmE and two MnmG subunits. K(+) is required as a cofactor.

It localises to the cytoplasm. Functionally, exhibits a very high intrinsic GTPase hydrolysis rate. Involved in the addition of a carboxymethylaminomethyl (cmnm) group at the wobble position (U34) of certain tRNAs, forming tRNA-cmnm(5)s(2)U34. This is tRNA modification GTPase MnmE from Pediococcus pentosaceus (strain ATCC 25745 / CCUG 21536 / LMG 10740 / 183-1w).